Consider the following 369-residue polypeptide: MGEITNVMEYQAIAKQKLPKMIYDYYASGAEDEWTLKENREAFSRILFRPRILIDVSKIDMSATVLGFKISMPIMIAPSAMQKMAHPDGEYATARAASAAGTIMTLSSWATSSVEEVASTGPGIRFFQLYVYKDRNVVEQLVRRAERAGFKAIALTVDTPRLGRREADIKNRFVLPPYLTLKNFEGLDLAEMDKSNDSGLASYVAGQIDRTLSWKDVKWLQSITSLPILVKGVITAEDARLAVHSGAAGIIVSNHGARQLDYVPATISALEEVVTAAAGRIPVYLDGGVRRGTDVFKALALGAAGVFIGRPVVFALAAEGEAGVRNVLRMMREEFELTMALSGCTSLADITRAHIYTDADRLARPFPRL.

In terms of domain architecture, FMN hydroxy acid dehydrogenase spans 1-360; the sequence is MGEITNVMEY…TRAHIYTDAD (360 aa). Position 25 (Y25) interacts with glyoxylate. Residues 78–80, S107, 128–130, and T156 contribute to the FMN site; these read PSA and QLY. Residue Y130 coordinates glyoxylate. R165 is a glyoxylate binding site. 2 residues coordinate FMN: K231 and S253. Glyoxylate contacts are provided by H255 and R258. Residue H255 is the Proton acceptor of the active site. FMN contacts are provided by residues 286–290 and 309–310; these read DGGVR and GR. The Microbody targeting signal signature appears at 367 to 369; it reads PRL.

Belongs to the FMN-dependent alpha-hydroxy acid dehydrogenase family. As to quaternary structure, homotetramer. Interacts with rice dwarf virus (RDV) P8. This interaction promotes viral P8 relocation to virus factories peripheral to peroxisomes. Requires FMN as cofactor.

The protein resides in the peroxisome. The catalysed reaction is glycolate + O2 = glyoxylate + H2O2. The protein operates within photosynthesis; photorespiration; glycine from 2-phosphoglycolate: step 2/3. In terms of biological role, catalyzes the oxidation of glycolate to glyoxylate, with a reduction of O2 to H2O2. Is a key enzyme in photorespiration in plants. Can exert a strong regulation over photosynthesis, possibly through a feed-back inhibition on Rubisco activase. Does not seem to play a role in oxalate accumulation. In Oryza sativa subsp. indica (Rice), this protein is Glycolate oxidase 1 (GLO1).